The sequence spans 341 residues: Ribosomal RNA small subunit methyltransferase C (341 aa).

Belongs to the methyltransferase superfamily. RsmC family. Monomer.

The protein resides in the cytoplasm. It catalyses the reaction guanosine(1207) in 16S rRNA + S-adenosyl-L-methionine = N(2)-methylguanosine(1207) in 16S rRNA + S-adenosyl-L-homocysteine + H(+). Its function is as follows. Specifically methylates the guanine in position 1207 of 16S rRNA in the 30S particle. The polypeptide is Ribosomal RNA small subunit methyltransferase C (Vibrio parahaemolyticus serotype O3:K6 (strain RIMD 2210633)).